Here is a 459-residue protein sequence, read N- to C-terminus: Cysteine--tRNA ligase (459 aa).

Cys28 is a binding site for Zn(2+). Positions 30–40 match the 'HIGH' region motif; it reads VTIYDLCHIGH. Cys209, His234, and Glu238 together coordinate Zn(2+). The 'KMSKS' region signature appears at 266 to 270; sequence KMSKS. Lys269 serves as a coordination point for ATP.

This sequence belongs to the class-I aminoacyl-tRNA synthetase family. In terms of assembly, monomer. It depends on Zn(2+) as a cofactor.

The protein resides in the cytoplasm. It catalyses the reaction tRNA(Cys) + L-cysteine + ATP = L-cysteinyl-tRNA(Cys) + AMP + diphosphate. In Shewanella pealeana (strain ATCC 700345 / ANG-SQ1), this protein is Cysteine--tRNA ligase.